The following is a 551-amino-acid chain: RanBD1 domain-containing protein C584.03c (551 aa).

Residues 1-309 (MDELLNVASH…LLLKYADDET (309 aa)) enclose the RanBD1 domain. A Phosphoserine modification is found at serine 441. The segment at 522 to 551 (SVIPHSEPESSSKVINCQAKLNVEKEKKNP) is disordered.

The protein localises to the nucleus. The chain is RanBD1 domain-containing protein C584.03c from Schizosaccharomyces pombe (strain 972 / ATCC 24843) (Fission yeast).